The sequence spans 89 residues: Putative regulatory protein BPUM_1466 (89 aa).

This sequence belongs to the RemA family.

This Bacillus pumilus (strain SAFR-032) protein is Putative regulatory protein BPUM_1466.